The chain runs to 549 residues: Cytoplasmic trehalase (549 aa).

Substrate is bound by residues Arg-168, 175–176 (WD), Asn-212, 221–223 (RSQ), 292–294 (RDE), and Gly-324. Active-site proton donor/acceptor residues include Asp-326 and Glu-509. Residue Glu-525 participates in substrate binding.

This sequence belongs to the glycosyl hydrolase 37 family. Monomer.

Its subcellular location is the cytoplasm. The enzyme catalyses alpha,alpha-trehalose + H2O = alpha-D-glucose + beta-D-glucose. It functions in the pathway glycan degradation; trehalose degradation; D-glucose from alpha,alpha-trehalose: step 1/1. Its function is as follows. Hydrolyzes trehalose to glucose. Could be involved, in cells returning to low osmolarity conditions, in the utilization of the accumulated cytoplasmic trehalose, which was synthesized in response to high osmolarity. This chain is Cytoplasmic trehalase, found in Escherichia coli O139:H28 (strain E24377A / ETEC).